We begin with the raw amino-acid sequence, 368 residues long: Repressor ROX1 (368 aa).

Residues 10–83 constitute a DNA-binding region (HMG box); it reads IPRPKNAFIL…EHERKYPEYK (74 aa). Disordered stretches follow at residues 100 to 121 and 242 to 273; these read IEQQ…QPQL and SSQT…SSVL. The segment covering 102–121 has biased composition (low complexity); it reads QQQQQQQKEQQQQKQSQPQL.

The protein resides in the nucleus. Functionally, transcription factor that represses the expression of HEM13, COX5B, ANB1, CYC7 or AAC3 (hypoxic function). Binds to the DNA sequence 5'-RRRTAACAAGAG-3'. This chain is Repressor ROX1 (ROX1), found in Saccharomyces cerevisiae (strain ATCC 204508 / S288c) (Baker's yeast).